The chain runs to 368 residues: DNA-directed RNA polymerase subunit alpha (368 aa).

An alpha N-terminal domain (alpha-NTD) region spans residues 1 to 231 (MLWKGFQKPK…DHMNIFINFE (231 aa)). Residues 243–368 (KPEIRNENLN…GFGGDNNPGF (126 aa)) form an alpha C-terminal domain (alpha-CTD) region.

Belongs to the RNA polymerase alpha chain family. Homodimer. The RNAP catalytic core consists of 2 alpha, 1 beta, 1 beta' and 1 omega subunit. When a sigma factor is associated with the core the holoenzyme is formed, which can initiate transcription.

The enzyme catalyses RNA(n) + a ribonucleoside 5'-triphosphate = RNA(n+1) + diphosphate. DNA-dependent RNA polymerase catalyzes the transcription of DNA into RNA using the four ribonucleoside triphosphates as substrates. The chain is DNA-directed RNA polymerase subunit alpha from Koribacter versatilis (strain Ellin345).